Reading from the N-terminus, the 276-residue chain is HUWE1-associated protein modifying stress responses 2 (276 aa).

3 disordered regions span residues 146-182, 204-238, and 252-276; these read GKVP…TPVG, ISMR…PNSL, and VRKR…NRMV. Positions 149-165 are enriched in pro residues; it reads PPTPQPPRTPRMSPRPP. 2 stretches are compositionally biased toward low complexity: residues 166 to 179 and 208 to 219; these read AAAS…ESGT and SGPPGSSSQDGG. A nuclear localization signal region spans residues 252–276; the sequence is VRKRTSAQFGDGSADSPLHKRNRMV.

This sequence belongs to the HAPSTR1 family. As to quaternary structure, homooligomer. Heterooligomer with HAPSTR1; the interaction is direct and stabilizes HAPSTR1 independently of HUWE1. Interacts with HUWE1.

It localises to the nucleus. Functionally, together with HAPSTR1 plays a central regulatory role in the cellular response to molecular stressors, such as DNA damage, nutrient scarcity, and protein misfolding. Regulates these multiple stress response signaling pathways by stabilizing HAPSTR1, but also independently of HAPSTR1. This is HUWE1-associated protein modifying stress responses 2 from Mus musculus (Mouse).